The sequence spans 164 residues: Type II secretion system protein M (164 aa).

Residues 1 to 17 (MNELRQRWQAMSQRERQ) are Cytoplasmic-facing. Residues 18 to 38 (LMVVCAAVLLLCVVYYAILQP) form a helical membrane-spanning segment. Topologically, residues 39-164 (WQEREDLWER…RLMLERTDEA (126 aa)) are periplasmic.

Belongs to the GSP M family. Type II secretion system is composed of four main components: the outer membrane complex, the inner membrane complex, the cytoplasmic secretion ATPase and the periplasm-spanning pseudopilus. Forms homodimers. Interacts with OutL/GspL. Interacts with OutE/GspE and OutF/GspF.

The protein localises to the cell inner membrane. Inner membrane component of the type II secretion system required for the energy-dependent secretion of extracellular factors such as proteases and toxins from the periplasm. Plays a role in the complex assembly and recruits OutL resulting in a stable complex in the inner membrane. Provides thus a link between the energy-providing OutE protein in the cytoplasm and the rest of the T2SS machinery. The sequence is that of Type II secretion system protein M (outM) from Pectobacterium carotovorum subsp. carotovorum (Erwinia carotovora subsp. carotovora).